Here is a 107-residue protein sequence, read N- to C-terminus: uncharacterized protein (107 aa).

A Glutaredoxin domain is found at 6 to 107; that stretch reads KARIDQLVTA…QEMLEVALAS (102 aa). K23 serves as a coordination point for glutathione. C31 contacts [2Fe-2S] cluster. Residues R60 and 85–86 contribute to the glutathione site; that span reads SD.

Belongs to the glutaredoxin family. Monothiol subfamily.

This is an uncharacterized protein from Synechocystis sp. (strain ATCC 27184 / PCC 6803 / Kazusa).